We begin with the raw amino-acid sequence, 193 residues long: Probable thymidylate kinase (193 aa).

Residue 7–14 (GIDGSGKT) coordinates ATP.

Belongs to the thymidylate kinase family.

It catalyses the reaction dTMP + ATP = dTDP + ADP. This chain is Probable thymidylate kinase, found in Pyrobaculum calidifontis (strain DSM 21063 / JCM 11548 / VA1).